The following is a 126-amino-acid chain: UPF0231 protein VC0395_A0134/VC395_0622 (126 aa).

This sequence belongs to the UPF0231 family.

The protein is UPF0231 protein VC0395_A0134/VC395_0622 of Vibrio cholerae serotype O1 (strain ATCC 39541 / Classical Ogawa 395 / O395).